The following is a 234-amino-acid chain: Demethylmenaquinone methyltransferase (234 aa).

Residues Thr-58, Asp-79, and 106-107 contribute to the S-adenosyl-L-methionine site; that span reads NA.

This sequence belongs to the class I-like SAM-binding methyltransferase superfamily. MenG/UbiE family.

It catalyses the reaction a 2-demethylmenaquinol + S-adenosyl-L-methionine = a menaquinol + S-adenosyl-L-homocysteine + H(+). Its pathway is quinol/quinone metabolism; menaquinone biosynthesis; menaquinol from 1,4-dihydroxy-2-naphthoate: step 2/2. Methyltransferase required for the conversion of demethylmenaquinol (DMKH2) to menaquinol (MKH2). In Geobacillus sp. (strain WCH70), this protein is Demethylmenaquinone methyltransferase.